Reading from the N-terminus, the 329-residue chain is 3'-5' exonuclease (329 aa).

Residues 26–88 (EEKPKPKKVV…MADVGTPSPE (63 aa)) are disordered. Positions 46 to 65 (KNLDTPEIVNKENAEVENPP) are enriched in basic and acidic residues. Phosphoserine is present on residues Ser78 and Ser86. Positions 130–288 (TEIVPMAFDM…IGQVIYREIE (159 aa)) constitute a 3'-5' exonuclease domain. Positions 138, 140, and 276 each coordinate Mg(2+).

It belongs to the WRNexo family.

It is found in the nucleus. Its function is as follows. Has exonuclease activity on both single-stranded and duplex templates bearing overhangs, but not blunt ended duplex DNA, and cleaves in a 3'-5' direction. Essential for the formation of DNA replication focal centers. Has an important role in maintaining genome stability. The chain is 3'-5' exonuclease from Drosophila mojavensis (Fruit fly).